The chain runs to 572 residues: Dihydroxy-acid dehydratase (572 aa).

Residue Cys57 coordinates [2Fe-2S] cluster. Residue Asp89 coordinates Mg(2+). [2Fe-2S] cluster is bound at residue Cys130. Positions 131 and 132 each coordinate Mg(2+). Position 132 is an N6-carboxylysine (Lys132). Residue Cys202 participates in [2Fe-2S] cluster binding. A Mg(2+)-binding site is contributed by Glu453. The active-site Proton acceptor is Ser479.

This sequence belongs to the IlvD/Edd family. In terms of assembly, homodimer. [2Fe-2S] cluster is required as a cofactor. The cofactor is Mg(2+).

The enzyme catalyses (2R)-2,3-dihydroxy-3-methylbutanoate = 3-methyl-2-oxobutanoate + H2O. It carries out the reaction (2R,3R)-2,3-dihydroxy-3-methylpentanoate = (S)-3-methyl-2-oxopentanoate + H2O. It participates in amino-acid biosynthesis; L-isoleucine biosynthesis; L-isoleucine from 2-oxobutanoate: step 3/4. It functions in the pathway amino-acid biosynthesis; L-valine biosynthesis; L-valine from pyruvate: step 3/4. Functionally, functions in the biosynthesis of branched-chain amino acids. Catalyzes the dehydration of (2R,3R)-2,3-dihydroxy-3-methylpentanoate (2,3-dihydroxy-3-methylvalerate) into 2-oxo-3-methylpentanoate (2-oxo-3-methylvalerate) and of (2R)-2,3-dihydroxy-3-methylbutanoate (2,3-dihydroxyisovalerate) into 2-oxo-3-methylbutanoate (2-oxoisovalerate), the penultimate precursor to L-isoleucine and L-valine, respectively. The sequence is that of Dihydroxy-acid dehydratase from Streptococcus thermophilus (strain CNRZ 1066).